Consider the following 579-residue polypeptide: YTH domain-containing family protein 2 (579 aa).

Positions 1-45 are disordered; that stretch reads MSASSLLEQRPKGQGNKVQNGSVHQKDGLNDDDFEPYLSPQARPN. An N-acetylserine modification is found at S2. 6 positions are modified to phosphoserine: S2, S4, S5, S22, S39, and S196. The tract at residues 2 to 384 is localization to mRNA processing bodies (P-bodies); it reads SASSLLEQRP…QAGSGSTPSE (383 aa). The tract at residues 247–387 is disordered; it reads AKQQPKLKTK…SGSTPSEPHP (141 aa). Over residues 291–316 the composition is skewed to polar residues; that stretch reads ALVQNIGQPTQGSPQPVGQQANNSPP. A compositionally biased stretch (low complexity) spans 337–349; sequence AQLSVQQQAAQPT. S359 is subject to Phosphoserine. Over residues 359–371 the composition is skewed to gly residues; it reads SGFGHNGVDGNGV. Residues 372 to 383 are compositionally biased toward polar residues; sequence GQSQAGSGSTPS. The tract at residues 385–579 is interaction with m6A-containing mRNAs; the sequence is PHPVLEKLRS…VKKERQGRGK (195 aa). Phosphoserine is present on S394. Positions 410 to 544 constitute a YTH domain; it reads GRVFIIKSYS…EKAKQVLKII (135 aa). RNA is bound by residues 416–418, D422, 432–433, N462, W486, and W491; these read KSY and WC.

The protein belongs to the YTHDF family. YTHDF2 subfamily. Interacts with CNOT1; interaction is direct and promotes recruitment of the CCR4-NOT complex. Interacts with YTHDF3. Interacts with RIDA/HRSP12; interaction leads to recruitment of the ribonuclease P/MRP complex. Ubiquitinated by the SCF(SKP2) complex, leading to its degradation. As to expression, widely expressed, with highest expression in testis.

The protein localises to the cytoplasm. The protein resides in the cytosol. It localises to the P-body. It is found in the stress granule. Its subcellular location is the nucleus. Functionally, specifically recognizes and binds N6-methyladenosine (m6A)-containing RNAs, and regulates their stability. M6A is a modification present at internal sites of mRNAs and some non-coding RNAs and plays a role in mRNA stability and processing. Acts as a regulator of mRNA stability by promoting degradation of m6A-containing mRNAs via interaction with the CCR4-NOT and ribonuclease P/MRP complexes, depending on the context. The YTHDF paralogs (YTHDF1, YTHDF2 and YTHDF3) share m6A-containing mRNAs targets and act redundantly to mediate mRNA degradation and cellular differentiation. M6A-containing mRNAs containing a binding site for RIDA/HRSP12 (5'-GGUUC-3') are preferentially degraded by endoribonucleolytic cleavage: cooperative binding of RIDA/HRSP12 and YTHDF2 to transcripts leads to recruitment of the ribonuclease P/MRP complex. Other m6A-containing mRNAs undergo deadenylation via direct interaction between YTHDF2 and CNOT1, leading to recruitment of the CCR4-NOT and subsequent deadenylation of m6A-containing mRNAs. Required maternally to regulate oocyte maturation: probably acts by binding to m6A-containing mRNAs, thereby regulating maternal transcript dosage during oocyte maturation, which is essential for the competence of oocytes to sustain early zygotic development. Also required during spermatogenesis: regulates spermagonial adhesion by promoting degradation of m6A-containing transcripts coding for matrix metallopeptidases. Also involved in hematopoietic stem cells specification by binding to m6A-containing mRNAs, leading to promote their degradation. Also acts as a regulator of neural development by promoting m6A-dependent degradation of neural development-related mRNA targets. Inhibits neural specification of induced pluripotent stem cells by binding to methylated neural-specific mRNAs and promoting their degradation, thereby restraining neural differentiation. Regulates circadian regulation of hepatic lipid metabolism: acts by promoting m6A-dependent degradation of PPARA transcripts. Regulates the innate immune response to infection by inhibiting the type I interferon response: acts by binding to m6A-containing IFNB transcripts and promoting their degradation. May also act as a promoter of cap-independent mRNA translation following heat shock stress: upon stress, relocalizes to the nucleus and specifically binds mRNAs with some m6A methylation mark at their 5'-UTR, protecting demethylation of mRNAs by FTO, thereby promoting cap-independent mRNA translation. Regulates mitotic entry by promoting the phase-specific m6A-dependent degradation of WEE1 transcripts. Promotes formation of phase-separated membraneless compartments, such as P-bodies or stress granules, by undergoing liquid-liquid phase separation upon binding to mRNAs containing multiple m6A-modified residues: polymethylated mRNAs act as a multivalent scaffold for the binding of YTHDF proteins, juxtaposing their disordered regions and thereby leading to phase separation. The resulting mRNA-YTHDF complexes then partition into different endogenous phase-separated membraneless compartments, such as P-bodies, stress granules or neuronal RNA granules. May also recognize and bind RNAs modified by C5-methylcytosine (m5C) and act as a regulator of rRNA processing. The chain is YTH domain-containing family protein 2 from Mus musculus (Mouse).